Consider the following 858-residue polypeptide: DNA mismatch repair protein MutS (858 aa).

Position 611–618 (611–618 (GPNMGGKS)) interacts with ATP.

Belongs to the DNA mismatch repair MutS family.

In terms of biological role, this protein is involved in the repair of mismatches in DNA. It is possible that it carries out the mismatch recognition step. This protein has a weak ATPase activity. This is DNA mismatch repair protein MutS from Actinobacillus succinogenes (strain ATCC 55618 / DSM 22257 / CCUG 43843 / 130Z).